Reading from the N-terminus, the 303-residue chain is D-alanine--D-alanine ligase (303 aa).

Positions 103–293 (KTLFIKGGIP…FAQLCEKILE (191 aa)) constitute an ATP-grasp domain. An ATP-binding site is contributed by 130 to 179 (PYVIKPSRQGSSIGIEFVYDIKELDQAIKKSTQYDHVVLAEALITGKELT). Residues Asp-247, Glu-260, and Asn-262 each contribute to the Mg(2+) site.

The protein belongs to the D-alanine--D-alanine ligase family. Requires Mg(2+) as cofactor. Mn(2+) serves as cofactor.

It is found in the cytoplasm. It catalyses the reaction 2 D-alanine + ATP = D-alanyl-D-alanine + ADP + phosphate + H(+). It participates in cell wall biogenesis; peptidoglycan biosynthesis. In terms of biological role, cell wall formation. This Methylacidiphilum infernorum (isolate V4) (Methylokorus infernorum (strain V4)) protein is D-alanine--D-alanine ligase.